The chain runs to 350 residues: Putative ankyrin repeat protein RBE_0589 (350 aa).

ANK repeat units follow at residues 81-110, 114-151, and 153-182; these read DGFT…NPNI, DIVT…EPTD, and SGWT…NLDI.

This Rickettsia bellii (strain RML369-C) protein is Putative ankyrin repeat protein RBE_0589.